Reading from the N-terminus, the 172-residue chain is Probable calcium-binding protein CML28 (172 aa).

EF-hand domains lie at 1–36, 37–72, 95–130, and 133–168; these read MDST…FGIF, IPDD…ILGD, DEDE…LGLK, and RTAD…GGFA. Residues D14, N16, D18, R20, E25, D50, N52, D54, C56, E61, D108, N110, D112, E119, D146, D148, D150, R152, and E157 each contribute to the Ca(2+) site.

Potential calcium sensor. In Oryza sativa subsp. japonica (Rice), this protein is Probable calcium-binding protein CML28 (CML28).